Reading from the N-terminus, the 164-residue chain is Small ribosomal subunit protein uS5 (164 aa).

Residues 10 to 73 (IEERVVAINR…ESAKKNMIEV (64 aa)) enclose the S5 DRBM domain.

This sequence belongs to the universal ribosomal protein uS5 family. As to quaternary structure, part of the 30S ribosomal subunit. Contacts proteins S4 and S8.

With S4 and S12 plays an important role in translational accuracy. In terms of biological role, located at the back of the 30S subunit body where it stabilizes the conformation of the head with respect to the body. In Streptococcus suis (strain 98HAH33), this protein is Small ribosomal subunit protein uS5.